Consider the following 279-residue polypeptide: DNA repair protein RecO (279 aa).

Belongs to the RecO family.

In terms of biological role, involved in DNA repair and RecF pathway recombination. The chain is DNA repair protein RecO from Thermosynechococcus vestitus (strain NIES-2133 / IAM M-273 / BP-1).